The primary structure comprises 174 residues: Shikimate kinase 2 (174 aa).

Residue 12 to 17 (GAGKTT) coordinates ATP. 2 residues coordinate Mg(2+): Thr-16 and Asp-32. Residues Asp-34, Arg-58, and Gly-79 each contribute to the substrate site. Positions 112 to 126 (EEYPQDTQRPTLTGR) are LID domain. Arg-120 serves as a coordination point for ATP. Arg-139 contacts substrate.

This sequence belongs to the shikimate kinase family. AroL subfamily. Monomer. It depends on Mg(2+) as a cofactor.

It is found in the cytoplasm. The catalysed reaction is shikimate + ATP = 3-phosphoshikimate + ADP + H(+). The protein operates within metabolic intermediate biosynthesis; chorismate biosynthesis; chorismate from D-erythrose 4-phosphate and phosphoenolpyruvate: step 5/7. Functionally, catalyzes the specific phosphorylation of the 3-hydroxyl group of shikimic acid using ATP as a cosubstrate. This Serratia proteamaculans (strain 568) protein is Shikimate kinase 2.